The primary structure comprises 293 residues: Undecaprenyl-diphosphatase (293 aa).

The next 8 helical transmembrane spans lie at 3–23 (IALA…EFLP), 43–63 (KGKI…CWEF), 85–105 (ANVV…GKWI), 109–129 (LFNP…ILLA), 178–198 (FALV…MLFG), 203–223 (VATE…TVYE), 238–258 (IFAV…RWLL), and 269–289 (FAWY…SGLV).

It belongs to the UppP family.

Its subcellular location is the cell inner membrane. The catalysed reaction is di-trans,octa-cis-undecaprenyl diphosphate + H2O = di-trans,octa-cis-undecaprenyl phosphate + phosphate + H(+). Functionally, catalyzes the dephosphorylation of undecaprenyl diphosphate (UPP). Confers resistance to bacitracin. This Cupriavidus necator (strain ATCC 17699 / DSM 428 / KCTC 22496 / NCIMB 10442 / H16 / Stanier 337) (Ralstonia eutropha) protein is Undecaprenyl-diphosphatase.